Consider the following 494-residue polypeptide: Caspase-8 (494 aa).

Positions 1 to 242 (MAGSNLLIHL…QEIESDNQQS (242 aa)) are excised as a propeptide. Residues H345 and C386 contribute to the active site. A propeptide spanning residues 401 to 410 (RIDVTTVSPD) is cleaved from the precursor.

This sequence belongs to the peptidase C14A family. Heterotetramer that consists of two anti-parallel arranged heterodimers, each one formed by a 15 kDa (caspase-8 subunit p15) and a 10 kDa (caspase-8 subunit p10) subunit. Interacts (via N-terminus) with Diap2; likely to bind Diap2 simultaneously with Fadd to form a trimeric complex. Interacts with Dark (via N-terminus). Polyubiquitinated by Diap2 following activation of the immune deficiency (Imd) pathway. In terms of tissue distribution, constitutively expressed in fat bodies of larvae and adults.

The protein localises to the cytoplasm. The catalysed reaction is Strict requirement for Asp at position P1 and has a preferred cleavage sequence of (Leu/Asp/Val)-Glu-Thr-Asp-|-(Gly/Ser/Ala).. Effector of the programmed cell death (PCD) activators rpr, grim and hid. May play an apoptotic role in the germline as well as soma. Fadd interacts with Dredd to promote cleavage of Dredd and is necessary and sufficient for enhancing Dredd-induced apoptosis. Plays a role in the innate immune response. Required for resistance to Gram-negative bacterial infection. Diap2-mediated ubiquitination of Dredd is critical for processing of imd and rel and the subsequent expression of antimicrobial genes such as DptA. This Drosophila melanogaster (Fruit fly) protein is Caspase-8.